A 992-amino-acid chain; its full sequence is UPF0182 protein Mb3215c (992 aa).

A run of 7 helical transmembrane segments spans residues 17 to 39, 59 to 81, 113 to 135, 169 to 191, 212 to 229, 255 to 277, and 284 to 306; these read RILI…LIDA, LATR…FGGL, LVGI…SYWA, LMLS…AHYI, LVSL…AYWL, VLPA…FSAI, and IPAI…WPLI. Residues 906-938 are disordered; it reads PTEAAVPPSPAANPPPPASGPQPPPVTAAPPVP. The span at 912–938 shows a compositional bias: pro residues; it reads PPSPAANPPPPASGPQPPPVTAAPPVP.

This sequence belongs to the UPF0182 family.

It is found in the cell membrane. This is UPF0182 protein Mb3215c from Mycobacterium bovis (strain ATCC BAA-935 / AF2122/97).